The primary structure comprises 293 residues: MAITASMVKELREKTGAGMMDCKKALTETNGDMDKAIDYLREKGIAKAAKKADRVAAEGLAYVKAEGNHAIIVEVNSETDFVAKNENFQKLVAELASHLLEKRPASVEEALEQPFNGGETVQEYINSAIAKIGEKLSLRRFEIVEKEDGDVFGQYIHMGGRIGVLSVIGQSSDEELAKDIAMHVAAINPTYVTRDQVSEDEVAREREVLKQQALNEGKPENIVEKMVEGRLGKYFEQVCLLDQAFVKDGDQKVGKYVQSKGATVKEFIRYEVGEGLEKREDNFAEEVMSQVKK.

The involved in Mg(2+) ion dislocation from EF-Tu stretch occupies residues threonine 79–valine 82.

Belongs to the EF-Ts family.

It is found in the cytoplasm. Its function is as follows. Associates with the EF-Tu.GDP complex and induces the exchange of GDP to GTP. It remains bound to the aminoacyl-tRNA.EF-Tu.GTP complex up to the GTP hydrolysis stage on the ribosome. This is Elongation factor Ts (tsf) from Halalkalibacterium halodurans (strain ATCC BAA-125 / DSM 18197 / FERM 7344 / JCM 9153 / C-125) (Bacillus halodurans).